The chain runs to 373 residues: Cathecol O-methyltransferase 1 (373 aa).

Residues G209, D232, D252, M253, M265, and K266 each contribute to the S-adenosyl-L-homocysteine site. An S-adenosyl-L-methionine-binding site is contributed by D232. Catalysis depends on H279, which acts as the Proton acceptor.

The protein belongs to the class I-like SAM-binding methyltransferase superfamily. Cation-independent O-methyltransferase family. COMT subfamily.

The catalysed reaction is catechol + S-adenosyl-L-methionine = guaiacol + S-adenosyl-L-homocysteine + H(+). Its function is as follows. O-methyltransferase that catalyzes the conversion of catechol to guaiacol. Involved in the production of guaiacol in fruits. The polypeptide is Cathecol O-methyltransferase 1 (Solanum lycopersicum (Tomato)).